The primary structure comprises 224 residues: tRNA (guanine-N(7)-)-methyltransferase (224 aa).

4 residues coordinate S-adenosyl-L-methionine: glutamate 54, glutamate 79, aspartate 106, and aspartate 129. Aspartate 129 is an active-site residue. Positions 133 and 165 each coordinate substrate.

It belongs to the class I-like SAM-binding methyltransferase superfamily. TrmB family.

The catalysed reaction is guanosine(46) in tRNA + S-adenosyl-L-methionine = N(7)-methylguanosine(46) in tRNA + S-adenosyl-L-homocysteine. It participates in tRNA modification; N(7)-methylguanine-tRNA biosynthesis. In terms of biological role, catalyzes the formation of N(7)-methylguanine at position 46 (m7G46) in tRNA. The polypeptide is tRNA (guanine-N(7)-)-methyltransferase (Chlamydia felis (strain Fe/C-56) (Chlamydophila felis)).